The chain runs to 184 residues: MHNELKQGYENIITAVGEDPNREGLLDTPKRAAKAMEYLTQGYRQTLEEITNNAVFTSDADDMVLVQDIELYSMCEHHLLPFTGRCHIAYIPNGKVLGLSKFARIVDMFARRFQIQEQLTHQIAKAVEEVTGATGVGVIVEAKHMCMMMRGVEKQNSSMRTSVMLGNFRADPKTRNEFLQLIKG.

Zn(2+)-binding residues include Cys75, His78, and Cys146.

This sequence belongs to the GTP cyclohydrolase I family. Toroid-shaped homodecamer, composed of two pentamers of five dimers.

The catalysed reaction is GTP + H2O = 7,8-dihydroneopterin 3'-triphosphate + formate + H(+). The protein operates within cofactor biosynthesis; 7,8-dihydroneopterin triphosphate biosynthesis; 7,8-dihydroneopterin triphosphate from GTP: step 1/1. The sequence is that of GTP cyclohydrolase 1 from Pseudoalteromonas translucida (strain TAC 125).